The following is a 543-amino-acid chain: Chaperonin GroEL (543 aa).

ATP contacts are provided by residues 29–32, 86–90, glycine 413, and aspartate 504; these read TVGP and DGTTT.

The protein belongs to the chaperonin (HSP60) family. Forms a cylinder of 14 subunits composed of two heptameric rings stacked back-to-back. Interacts with the co-chaperonin GroES.

The protein localises to the cytoplasm. The catalysed reaction is ATP + H2O + a folded polypeptide = ADP + phosphate + an unfolded polypeptide.. Functionally, together with its co-chaperonin GroES, plays an essential role in assisting protein folding. The GroEL-GroES system forms a nano-cage that allows encapsulation of the non-native substrate proteins and provides a physical environment optimized to promote and accelerate protein folding. In Mycoplasma pneumoniae (strain ATCC 29342 / M129 / Subtype 1) (Mycoplasmoides pneumoniae), this protein is Chaperonin GroEL.